Here is an 863-residue protein sequence, read N- to C-terminus: Dipeptidyl peptidase 9 (863 aa).

The disordered stretch occupies residues 1–20 (MATTGTPTADRGDAAATDDP). Ala-2 bears the N-acetylalanine mark. Catalysis depends on charge relay system residues Ser-730, Asp-808, and His-840. A Val-boroPro-binding site is contributed by Ser-730.

Belongs to the peptidase S9B family. DPPIV subfamily. Homodimer. Forms a ternary complex with NLRP1, composed of a DPP9 homodimer, one full-length NLRP1 protein, and one cleaved C-terminus of NLRP1 (NACHT, LRR and PYD domains-containing protein 1, C-terminus). Forms a ternary complex with CARD8, composed of a DPP9 homodimer, one full-length NLRP1 protein, and one cleaved C-terminus of CARD8 (Caspase recruitment domain-containing protein 8, C-terminus). In the ternary complex, only one subunit of the DPP9 homodimer is bound to NLRP1 or CARD8. Ubiquitously expressed, with highest levels in liver, heart and muscle, and lowest levels in brain.

Its subcellular location is the cytoplasm. It is found in the cytosol. The protein localises to the nucleus. The catalysed reaction is Release of an N-terminal dipeptide, Xaa-Yaa-|-Zaa-, from a polypeptide, preferentially when Yaa is Pro, provided Zaa is neither Pro nor hydroxyproline.. Its activity is regulated as follows. Inhibited by the serine proteinase inhibitor 4-(2-aminoethyl)benzenesulphonyl fluoride (AEBSF), and by di-isopropylfluorophosphate. Inhibited by Val-boroPro (Talabostat, PT-100), a non-selective inhibitor, which triggers pyroptosis in monocytes and macrophages. Val-boroPro inhibits activity by binding to the active site, mimicking a substrate-bound state, thereby displacing the C-terminal fragment of NLRP1, leading to activation of the NLRP1 inflammasome. In contrast, Val-boroPro does not directly displaces CARD8: it acts by promoting degradation of the N-terminal part of CARD8, leading to indirect disruption of the ternary complex. Chemical inhibition of DPP9 by Val-boroPro in HIV-1-infected cells activates the CARD8 inflammasome, triggering cell death, offering a promising strategy for the elimination of HIV-1 reservoirs in people living with HIV-1. In terms of biological role, dipeptidyl peptidase that cleaves off N-terminal dipeptides from proteins having a Pro or Ala residue at position 2. Acts as a key inhibitor of caspase-1-dependent monocyte and macrophage pyroptosis in resting cells by preventing activation of NLRP1 and CARD8. Sequesters the cleaved C-terminal part of NLRP1 and CARD8, which respectively constitute the active part of the NLRP1 and CARD8 inflammasomes, in a ternary complex, thereby preventing their oligomerization and activation. The dipeptidyl peptidase activity is required to suppress NLRP1 and CARD8; however, neither NLRP1 nor CARD8 are bona fide substrates of DPP9, suggesting the existence of substrate(s) required for NLRP1 and CARD8 inhibition. The polypeptide is Dipeptidyl peptidase 9 (Homo sapiens (Human)).